The primary structure comprises 1211 residues: A disintegrin and metalloproteinase with thrombospondin motifs 2 (1211 aa).

The N-terminal stretch at 1-29 (MDPPAGAARRLLCPALLLLLLLLPPPLLP) is a signal peptide. Residues 30-253 (PPPPPANARL…GVLEEHANSS (224 aa)) constitute a propeptide that is removed on maturation. Asparagine 112 and asparagine 251 each carry an N-linked (GlcNAc...) asparagine glycan. The region spanning 266–470 (YNIEVLLGVD…HSYDCLLDDP (205 aa)) is the Peptidase M12B domain. 10 cysteine pairs are disulfide-bonded: cysteine 343-cysteine 392, cysteine 386-cysteine 465, cysteine 425-cysteine 451, cysteine 492-cysteine 517, cysteine 503-cysteine 526, cysteine 512-cysteine 545, cysteine 539-cysteine 550, cysteine 573-cysteine 610, cysteine 577-cysteine 615, and cysteine 588-cysteine 600. Residue histidine 408 participates in Zn(2+) binding. Glutamate 409 is a catalytic residue. The Zn(2+) site is built by histidine 412 and histidine 418. A Disintegrin domain is found at 480-560 (QLPGLHYSMN…IWLTPDILKR (81 aa)). In terms of domain architecture, TSP type-1 1 spans 561-616 (DGSWGAWSPFGSCSRTCGTGVKFRTRQCDNPHPANGGRTCSGLAYDFQLCSRQDCP). The Cell attachment site motif lies at 691–693 (RGD). Residues 723–851 (KVVKGTFTRS…NVDDNNVLEE (129 aa)) are spacer. TSP type-1 domains are found at residues 854-912 (VVYE…NPQE), 914-971 (SQPV…RACS), and 975-1029 (CPGR…GPCP). N-linked (GlcNAc...) asparagine glycans are attached at residues asparagine 949 and asparagine 993. Intrachain disulfides connect cysteine 987–cysteine 1023, cysteine 991–cysteine 1028, and cysteine 1002–cysteine 1012. An N-linked (GlcNAc...) asparagine glycan is attached at asparagine 1031. The PLAC domain maps to 1059 to 1097 (SKGHCQGDKSIFCRMEVLSRYCSIPGYNKLCCKSCNLYN). N-linked (GlcNAc...) asparagine glycosylation is found at asparagine 1098, asparagine 1145, and asparagine 1150. The tract at residues 1170–1191 (LEDEVQPPNLIPRRPSPYEKTR) is disordered.

In terms of assembly, may belong to a multimeric complex. Binds specifically to collagen type XIV. Requires Zn(2+) as cofactor. Post-translationally, the precursor is cleaved by a furin endopeptidase. Glycosylated. Can be O-fucosylated by POFUT2 on a serine or a threonine residue found within the consensus sequence C1-X(2)-(S/T)-C2-G of the TSP type-1 repeat domains where C1 and C2 are the first and second cysteine residue of the repeat, respectively. Fucosylated repeats can then be further glycosylated by the addition of a beta-1,3-glucose residue by the glucosyltransferase, B3GALTL. Fucosylation mediates the efficient secretion of ADAMTS family members. Can also be C-glycosylated with one or two mannose molecules on tryptophan residues within the consensus sequence W-X-X-W of the TPRs, and N-glycosylated. These other glycosylations can also facilitate secretion. In terms of tissue distribution, expressed at high level in skin, bone, tendon and aorta and at low levels in thymus and brain.

Its subcellular location is the secreted. The protein resides in the extracellular space. It localises to the extracellular matrix. The enzyme catalyses Cleaves the N-propeptide of collagen chain alpha1(I) at Pro-|-Gln and of alpha1(II) and alpha2(I) at Ala-|-Gln.. Cleaves the propeptides of type I and II collagen prior to fibril assembly. Does not act on type III collagen. Cleaves lysyl oxidase LOX at a site downstream of its propeptide cleavage site to produce a short LOX form with reduced collagen-binding activity. The protein is A disintegrin and metalloproteinase with thrombospondin motifs 2 (ADAMTS2) of Homo sapiens (Human).